The sequence spans 173 residues: MEIKDLQDYVAIVNDWPKKGIVFKDITPLMNDGEAYRFATDKIVEYAKELKIDIIVGPEARGFIIGCPVAYALGIGFAPVRKPGKLPRETIEMEYDLEYGTNKLSMHSDAIKPGQRVLITDDLLATGGTIEATIKLVEELGGIVAGCAFLIELKELEGHKKLNGYDRLILMQL.

This sequence belongs to the purine/pyrimidine phosphoribosyltransferase family. In terms of assembly, homodimer.

It localises to the cytoplasm. The enzyme catalyses AMP + diphosphate = 5-phospho-alpha-D-ribose 1-diphosphate + adenine. It functions in the pathway purine metabolism; AMP biosynthesis via salvage pathway; AMP from adenine: step 1/1. In terms of biological role, catalyzes a salvage reaction resulting in the formation of AMP, that is energically less costly than de novo synthesis. This Listeria monocytogenes serotype 4b (strain CLIP80459) protein is Adenine phosphoribosyltransferase.